The following is a 396-amino-acid chain: Phosphoglycerate kinase (396 aa).

Substrate-binding positions include D21–N23, R36, H59–R62, R118, and R151. ATP contacts are provided by residues K201, G292, E323, and G349–S352.

It belongs to the phosphoglycerate kinase family. In terms of assembly, monomer.

The protein resides in the cytoplasm. The catalysed reaction is (2R)-3-phosphoglycerate + ATP = (2R)-3-phospho-glyceroyl phosphate + ADP. The protein operates within carbohydrate degradation; glycolysis; pyruvate from D-glyceraldehyde 3-phosphate: step 2/5. This Leptospira interrogans serogroup Icterohaemorrhagiae serovar copenhageni (strain Fiocruz L1-130) protein is Phosphoglycerate kinase.